A 201-amino-acid polypeptide reads, in one-letter code: Pyridoxal 5'-phosphate synthase subunit PdxT (201 aa).

49–51 (GES) contributes to the L-glutamine binding site. C81 (nucleophile) is an active-site residue. L-glutamine contacts are provided by residues R110 and 139 to 140 (IR). Active-site charge relay system residues include H180 and E182.

This sequence belongs to the glutaminase PdxT/SNO family. As to quaternary structure, in the presence of PdxS, forms a dodecamer of heterodimers. Only shows activity in the heterodimer.

The catalysed reaction is aldehydo-D-ribose 5-phosphate + D-glyceraldehyde 3-phosphate + L-glutamine = pyridoxal 5'-phosphate + L-glutamate + phosphate + 3 H2O + H(+). It catalyses the reaction L-glutamine + H2O = L-glutamate + NH4(+). It functions in the pathway cofactor biosynthesis; pyridoxal 5'-phosphate biosynthesis. Its function is as follows. Catalyzes the hydrolysis of glutamine to glutamate and ammonia as part of the biosynthesis of pyridoxal 5'-phosphate. The resulting ammonia molecule is channeled to the active site of PdxS. The polypeptide is Pyridoxal 5'-phosphate synthase subunit PdxT (Salinispora arenicola (strain CNS-205)).